Reading from the N-terminus, the 585-residue chain is Arginine--tRNA ligase (585 aa).

The 'HIGH' region signature appears at 131–141; sequence ANPTGPMHVGH.

This sequence belongs to the class-I aminoacyl-tRNA synthetase family. As to quaternary structure, monomer.

Its subcellular location is the cytoplasm. The enzyme catalyses tRNA(Arg) + L-arginine + ATP = L-arginyl-tRNA(Arg) + AMP + diphosphate. The chain is Arginine--tRNA ligase from Rhizobium etli (strain ATCC 51251 / DSM 11541 / JCM 21823 / NBRC 15573 / CFN 42).